Consider the following 179-residue polypeptide: Large ribosomal subunit protein uL5 (179 aa).

It belongs to the universal ribosomal protein uL5 family. In terms of assembly, part of the 50S ribosomal subunit; part of the 5S rRNA/L5/L18/L25 subcomplex. Contacts the 5S rRNA and the P site tRNA. Forms a bridge to the 30S subunit in the 70S ribosome.

Its function is as follows. This is one of the proteins that bind and probably mediate the attachment of the 5S RNA into the large ribosomal subunit, where it forms part of the central protuberance. In the 70S ribosome it contacts protein S13 of the 30S subunit (bridge B1b), connecting the 2 subunits; this bridge is implicated in subunit movement. Contacts the P site tRNA; the 5S rRNA and some of its associated proteins might help stabilize positioning of ribosome-bound tRNAs. The sequence is that of Large ribosomal subunit protein uL5 from Staphylococcus saprophyticus subsp. saprophyticus (strain ATCC 15305 / DSM 20229 / NCIMB 8711 / NCTC 7292 / S-41).